Reading from the N-terminus, the 431-residue chain is Homogentisate 1,2-dioxygenase (431 aa).

Residue His286 is the Proton acceptor of the active site. The Fe cation site is built by His329 and Glu335. The homogentisate site is built by Tyr344 and His365. His365 serves as a coordination point for Fe cation.

Belongs to the homogentisate dioxygenase family. Hexamer; dimer of trimers. It depends on Fe cation as a cofactor.

The enzyme catalyses homogentisate + O2 = 4-maleylacetoacetate + H(+). It participates in amino-acid degradation; L-phenylalanine degradation; acetoacetate and fumarate from L-phenylalanine: step 4/6. Its function is as follows. Involved in the catabolism of homogentisate (2,5-dihydroxyphenylacetate or 2,5-OH-PhAc), a central intermediate in the degradation of phenylalanine and tyrosine. Catalyzes the oxidative ring cleavage of the aromatic ring of homogentisate to yield maleylacetoacetate. The polypeptide is Homogentisate 1,2-dioxygenase (Pseudomonas fluorescens (strain Pf0-1)).